The sequence spans 179 residues: MSETAIQAVERKEKPKEVRSKGFVPGVIYGKGMDSISVKFDEKRLNKALQGRSQKAKISVQVAGETKQCFVGEIQKDITSGKTIHISMQVVEDDQVVKMKVPITFGGSEALSERKLIVLPYFSELELTGPSADIPEYVAVDVADKSLGDKITVADFMVSPSVSVLDDPEKIIAAITGAR.

This sequence belongs to the bacterial ribosomal protein bL25 family. CTC subfamily. As to quaternary structure, part of the 50S ribosomal subunit; part of the 5S rRNA/L5/L18/L25 subcomplex. Contacts the 5S rRNA. Binds to the 5S rRNA independently of L5 and L18.

In terms of biological role, this is one of the proteins that binds to the 5S RNA in the ribosome where it forms part of the central protuberance. The polypeptide is Large ribosomal subunit protein bL25 (Desulfitobacterium hafniense (strain DSM 10664 / DCB-2)).